The following is a 610-amino-acid chain: Elongation factor 4 (610 aa).

The 183-residue stretch at 11–193 (ENIRNFSIIA…QIVEKVPAPS (183 aa)) folds into the tr-type G domain. GTP-binding positions include 23 to 28 (DHGKST) and 140 to 143 (NKID).

It belongs to the TRAFAC class translation factor GTPase superfamily. Classic translation factor GTPase family. LepA subfamily.

It localises to the cell membrane. It carries out the reaction GTP + H2O = GDP + phosphate + H(+). Functionally, required for accurate and efficient protein synthesis under certain stress conditions. May act as a fidelity factor of the translation reaction, by catalyzing a one-codon backward translocation of tRNAs on improperly translocated ribosomes. Back-translocation proceeds from a post-translocation (POST) complex to a pre-translocation (PRE) complex, thus giving elongation factor G a second chance to translocate the tRNAs correctly. Binds to ribosomes in a GTP-dependent manner. The protein is Elongation factor 4 of Streptococcus equi subsp. zooepidemicus (strain MGCS10565).